The primary structure comprises 100 residues: MNLSPREKDKLLVAMAAVVARRRLERGVKLNYPEAVALITDFVVEGARDGHSVADLMERGGAVIGREQVMEGVAEMIDEIQVEATFTDGTKLVTVHEPIR.

The protein belongs to the urease gamma subunit family. Heterotrimer of UreA (gamma), UreB (beta) and UreC (alpha) subunits. Three heterotrimers associate to form the active enzyme.

The protein localises to the cytoplasm. It carries out the reaction urea + 2 H2O + H(+) = hydrogencarbonate + 2 NH4(+). It functions in the pathway nitrogen metabolism; urea degradation; CO(2) and NH(3) from urea (urease route): step 1/1. This Methylocella silvestris (strain DSM 15510 / CIP 108128 / LMG 27833 / NCIMB 13906 / BL2) protein is Urease subunit gamma.